We begin with the raw amino-acid sequence, 316 residues long: Olfactory receptor 2AG1 (316 aa).

The Extracellular portion of the chain corresponds to 1–25; sequence MELWNFTLGSGFILVGILNDSGSPE. N-linked (GlcNAc...) asparagine glycosylation is found at Asn-5 and Asn-19. Residues 26–49 form a helical membrane-spanning segment; the sequence is LLCATITILYLLALISNGLLLLAI. Over 50–57 the chain is Cytoplasmic; sequence TMEARLHM. The chain crosses the membrane as a helical span at residues 58–79; sequence PMYLLLGQLSLMDLLFTSVVTP. Residues 80–100 lie on the Extracellular side of the membrane; sequence KALADFLRRENTISFGGCALQ. Cys-97 and Cys-189 are oxidised to a cystine. Residues 101-120 traverse the membrane as a helical segment; that stretch reads MFLALTMGGAEDLLLAFMAY. The Cytoplasmic portion of the chain corresponds to 121–139; that stretch reads DRYVAICHPLTYMTLMSSR. The chain crosses the membrane as a helical span at residues 140–158; the sequence is ACWLMVATSWILASLSALI. The Extracellular segment spans residues 159–195; that stretch reads YTVYTMHYPFCRAQEIRHLLCEIPHLLKVACADTSRY. A helical transmembrane segment spans residues 196-219; that stretch reads ELMVYVMGVTFLIPSLAAILASYT. At 220-236 the chain is on the cytoplasmic side; it reads QILLTVLHMPSNEGRKK. Residues 237–259 form a helical membrane-spanning segment; the sequence is ALVTCSSHLTVVGMFYGAATFMY. Over 260-272 the chain is Extracellular; it reads VLPSSFHSTRQDN. A helical membrane pass occupies residues 273 to 292; that stretch reads IISVFYTIVTPALNPLIYSL. The Cytoplasmic portion of the chain corresponds to 293-316; that stretch reads RNKEVMRALRRVLGKYMLPAHSTL.

This sequence belongs to the G-protein coupled receptor 1 family.

It localises to the cell membrane. In terms of biological role, odorant receptor. The polypeptide is Olfactory receptor 2AG1 (OR2AG1) (Homo sapiens (Human)).